The following is a 472-amino-acid chain: Methanethiol oxidase (472 aa).

Alanine 2 is subject to N-acetylalanine. Residues serine 111, serine 371, and serine 467 each carry the phosphoserine modification.

This sequence belongs to the selenium-binding protein family. As to quaternary structure, interacts with USP33. The N-terminus is blocked.

It localises to the nucleus. The protein localises to the cytoplasm. The protein resides in the cytosol. Its subcellular location is the membrane. It catalyses the reaction methanethiol + O2 + H2O = hydrogen sulfide + formaldehyde + H2O2 + H(+). It participates in organosulfur degradation. In terms of biological role, catalyzes the oxidation of methanethiol, an organosulfur compound known to be produced in substantial amounts by gut bacteria. Selenium-binding protein which may be involved in the sensing of reactive xenobiotics in the cytoplasm. May be involved in intra-Golgi protein transport. This Pongo abelii (Sumatran orangutan) protein is Methanethiol oxidase (SELENBP1).